The sequence spans 502 residues: Ribose import ATP-binding protein RbsA (502 aa).

2 consecutive ABC transporter domains span residues I6–D242 and A253–R496. G38–S45 contributes to the ATP binding site.

It belongs to the ABC transporter superfamily. Ribose importer (TC 3.A.1.2.1) family. The complex is composed of an ATP-binding protein (RbsA), two transmembrane proteins (RbsC) and a solute-binding protein (RbsB).

The protein localises to the cell inner membrane. It catalyses the reaction D-ribose(out) + ATP + H2O = D-ribose(in) + ADP + phosphate + H(+). Part of the ABC transporter complex RbsABC involved in ribose import. Responsible for energy coupling to the transport system. This is Ribose import ATP-binding protein RbsA from Cereibacter sphaeroides (strain ATCC 17023 / DSM 158 / JCM 6121 / CCUG 31486 / LMG 2827 / NBRC 12203 / NCIMB 8253 / ATH 2.4.1.) (Rhodobacter sphaeroides).